The chain runs to 53 residues: uncharacterized protein (53 aa).

The helical transmembrane segment at 20–42 (ILFPVLLVFDTILIVVGIALILF) threads the bilayer.

The protein resides in the membrane. This is an uncharacterized protein from Archaeoglobus fulgidus (strain ATCC 49558 / DSM 4304 / JCM 9628 / NBRC 100126 / VC-16).